A 231-amino-acid polypeptide reads, in one-letter code: Ribonuclease HII (231 aa).

An RNase H type-2 domain is found at 33–222; sequence WPVAGADEAG…FREAQEQPLA (190 aa). Residues Asp39, Glu40, and Asp130 each coordinate a divalent metal cation.

This sequence belongs to the RNase HII family. Requires Mn(2+) as cofactor. Mg(2+) is required as a cofactor.

It localises to the cytoplasm. The enzyme catalyses Endonucleolytic cleavage to 5'-phosphomonoester.. Functionally, endonuclease that specifically degrades the RNA of RNA-DNA hybrids. The sequence is that of Ribonuclease HII from Sinorhizobium fredii (strain NBRC 101917 / NGR234).